A 200-amino-acid chain; its full sequence is Ras-related protein RHN1 (200 aa).

GTP-binding positions include 17 to 25 (GDMGAGKSS), 36 to 42 (LEFQEST), 65 to 69 (DTAGQ), 123 to 126 (NKAD), and 153 to 155 (SAK). The Effector region motif lies at 39 to 47 (QESTIGAAF). S-geranylgeranyl cysteine attachment occurs at residues cysteine 198 and cysteine 199.

Belongs to the small GTPase superfamily. Rab family. High in stem, root, and inflorescence.

It is found in the cell membrane. Its function is as follows. Protein transport. Probably involved in vesicular traffic. This chain is Ras-related protein RHN1 (RHN1), found in Nicotiana plumbaginifolia (Leadwort-leaved tobacco).